Consider the following 481-residue polypeptide: Hyaluronidase-4 (481 aa).

The Cytoplasmic segment spans residues 1-8; the sequence is MKVLSEGQ. The chain crosses the membrane as a helical span at residues 9-29; it reads LKLCVVQPVHLTSWLLIFFIL. The Extracellular portion of the chain corresponds to 30–453; sequence KSISCLKPAR…ADCREIKTAD (424 aa). Cystine bridges form between Cys59/Cys351, Cys223/Cys237, Cys376/Cys387, Cys381/Cys435, and Cys437/Cys446. 2 N-linked (GlcNAc...) asparagine glycosylation sites follow: Asn86 and Asn115. The Proton donor role is filled by Glu147. The N-linked (GlcNAc...) (complex) asparagine glycan is linked to Asn177. Asn343 carries N-linked (GlcNAc...) asparagine glycosylation. A helical membrane pass occupies residues 454–474; it reads GCSGVSPSPGSLMTLCLLLLA. At 475–481 the chain is on the cytoplasmic side; sequence SYRSIQL.

Belongs to the glycosyl hydrolase 56 family. In terms of tissue distribution, detected in placenta and skeletal muscle.

Its subcellular location is the membrane. The catalysed reaction is Random hydrolysis of (1-&gt;4)-linkages between N-acetyl-beta-D-glucosamine and D-glucuronate residues in hyaluronate.. Endo-hyaluronidase that degrades hyaluronan to smaller oligosaccharide fragments. Also has chondroitin sulfate hydrolase activity, The best substrate being the galactosaminidic linkage in the sequence of a trisulfated tetrasaccharide. The sequence is that of Hyaluronidase-4 (HYAL4) from Homo sapiens (Human).